Reading from the N-terminus, the 239-residue chain is Ribose-5-phosphate isomerase A (239 aa).

Substrate contacts are provided by residues 40-43, 96-99, and 110-113; these read SGST, DGAD, and KGGG. The active-site Proton acceptor is the E119. K137 contributes to the substrate binding site.

This sequence belongs to the ribose 5-phosphate isomerase family. Homodimer.

It carries out the reaction aldehydo-D-ribose 5-phosphate = D-ribulose 5-phosphate. The protein operates within carbohydrate degradation; pentose phosphate pathway; D-ribose 5-phosphate from D-ribulose 5-phosphate (non-oxidative stage): step 1/1. Catalyzes the reversible conversion of ribose-5-phosphate to ribulose 5-phosphate. This chain is Ribose-5-phosphate isomerase A, found in Methanococcus maripaludis (strain C5 / ATCC BAA-1333).